Consider the following 317-residue polypeptide: Methionyl-tRNA formyltransferase (317 aa).

(6S)-5,6,7,8-tetrahydrofolate is bound at residue 113 to 116; sequence SLLP.

The protein belongs to the Fmt family.

The catalysed reaction is L-methionyl-tRNA(fMet) + (6R)-10-formyltetrahydrofolate = N-formyl-L-methionyl-tRNA(fMet) + (6S)-5,6,7,8-tetrahydrofolate + H(+). Attaches a formyl group to the free amino group of methionyl-tRNA(fMet). The formyl group appears to play a dual role in the initiator identity of N-formylmethionyl-tRNA by promoting its recognition by IF2 and preventing the misappropriation of this tRNA by the elongation apparatus. The polypeptide is Methionyl-tRNA formyltransferase (Pseudomonas fluorescens (strain SBW25)).